The chain runs to 295 residues: Light-independent protochlorophyllide reductase iron-sulfur ATP-binding protein (295 aa).

Residues 39-44 (GIGKST) and Lys-68 contribute to the ATP site. Ser-43 contributes to the Mg(2+) binding site. [4Fe-4S] cluster contacts are provided by Cys-124 and Cys-158. Position 209–210 (209–210 (NR)) interacts with ATP.

It belongs to the NifH/BchL/ChlL family. Homodimer. Protochlorophyllide reductase is composed of three subunits; ChlL, ChlN and ChlB. Requires [4Fe-4S] cluster as cofactor.

The catalysed reaction is chlorophyllide a + oxidized 2[4Fe-4S]-[ferredoxin] + 2 ADP + 2 phosphate = protochlorophyllide a + reduced 2[4Fe-4S]-[ferredoxin] + 2 ATP + 2 H2O. Its pathway is porphyrin-containing compound metabolism; chlorophyll biosynthesis (light-independent). Functionally, component of the dark-operative protochlorophyllide reductase (DPOR) that uses Mg-ATP and reduced ferredoxin to reduce ring D of protochlorophyllide (Pchlide) to form chlorophyllide a (Chlide). This reaction is light-independent. The L component serves as a unique electron donor to the NB-component of the complex, and binds Mg-ATP. The sequence is that of Light-independent protochlorophyllide reductase iron-sulfur ATP-binding protein from Prochlorococcus marinus (strain MIT 9301).